The chain runs to 232 residues: 5'-methylthioadenosine/S-adenosylhomocysteine nucleosidase (232 aa).

The active-site Proton acceptor is the Glu12. Substrate-binding positions include Gly78, Ile152, and Met173–Glu174. Residue Asp197 is the Proton donor of the active site.

This sequence belongs to the PNP/UDP phosphorylase family. MtnN subfamily. As to quaternary structure, homodimer.

It catalyses the reaction S-adenosyl-L-homocysteine + H2O = S-(5-deoxy-D-ribos-5-yl)-L-homocysteine + adenine. It carries out the reaction S-methyl-5'-thioadenosine + H2O = 5-(methylsulfanyl)-D-ribose + adenine. The enzyme catalyses 5'-deoxyadenosine + H2O = 5-deoxy-D-ribose + adenine. It functions in the pathway amino-acid biosynthesis; L-methionine biosynthesis via salvage pathway; S-methyl-5-thio-alpha-D-ribose 1-phosphate from S-methyl-5'-thioadenosine (hydrolase route): step 1/2. Its function is as follows. Catalyzes the irreversible cleavage of the glycosidic bond in both 5'-methylthioadenosine (MTA) and S-adenosylhomocysteine (SAH/AdoHcy) to adenine and the corresponding thioribose, 5'-methylthioribose and S-ribosylhomocysteine, respectively. Also cleaves 5'-deoxyadenosine, a toxic by-product of radical S-adenosylmethionine (SAM) enzymes, into 5-deoxyribose and adenine. Thus, is required for in vivo function of the radical SAM enzymes biotin synthase and lipoic acid synthase, that are inhibited by 5'-deoxyadenosine accumulation. The polypeptide is 5'-methylthioadenosine/S-adenosylhomocysteine nucleosidase (Escherichia fergusonii (strain ATCC 35469 / DSM 13698 / CCUG 18766 / IAM 14443 / JCM 21226 / LMG 7866 / NBRC 102419 / NCTC 12128 / CDC 0568-73)).